We begin with the raw amino-acid sequence, 1271 residues long: DNA-directed RNA polymerase subunit beta (1271 aa).

Belongs to the RNA polymerase beta chain family. As to quaternary structure, the RNAP catalytic core consists of 2 alpha, 1 beta, 1 beta' and 1 omega subunit. When a sigma factor is associated with the core the holoenzyme is formed, which can initiate transcription.

The catalysed reaction is RNA(n) + a ribonucleoside 5'-triphosphate = RNA(n+1) + diphosphate. In terms of biological role, DNA-dependent RNA polymerase catalyzes the transcription of DNA into RNA using the four ribonucleoside triphosphates as substrates. The sequence is that of DNA-directed RNA polymerase subunit beta from Acholeplasma laidlawii (strain PG-8A).